The sequence spans 267 residues: Tryptophan synthase alpha chain (267 aa).

Catalysis depends on proton acceptor residues Glu-43 and Asp-54.

The protein belongs to the TrpA family. In terms of assembly, tetramer of two alpha and two beta chains.

It catalyses the reaction (1S,2R)-1-C-(indol-3-yl)glycerol 3-phosphate + L-serine = D-glyceraldehyde 3-phosphate + L-tryptophan + H2O. It functions in the pathway amino-acid biosynthesis; L-tryptophan biosynthesis; L-tryptophan from chorismate: step 5/5. In terms of biological role, the alpha subunit is responsible for the aldol cleavage of indoleglycerol phosphate to indole and glyceraldehyde 3-phosphate. The protein is Tryptophan synthase alpha chain of Bacillus subtilis subsp. natto.